Reading from the N-terminus, the 379-residue chain is Putative phosphatidate phosphatase (379 aa).

The tract at residues 1–53 (MPAVKIIMSTETSASETTPLRRSENETPDHKELAQSNSNSRQTTVNSNNNNYS) is disordered. The segment covering 9-18 (STETSASETT) has biased composition (polar residues). A compositionally biased stretch (basic and acidic residues) spans 19-33 (PLRRSENETPDHKEL). A compositionally biased stretch (low complexity) spans 35-53 (QSNSNSRQTTVNSNNNNYS). The N-linked (GlcNAc...) asparagine glycan is linked to Asn-51. The next 2 membrane-spanning stretches (helical) occupy residues 90–110 (VGLDVLILLCAGFPILLFFLL) and 138–158 (MLYFIGAVIPVGVIFIVEVII). A glycan (N-linked (GlcNAc...) asparagine) is linked at Asn-169. The next 2 helical transmembrane spans lie at 266–286 (SFPSGHSSFTFFAMVYLALYL) and 330–350 (AGSLIGSISALVVANYVSDLF).

The protein belongs to the PA-phosphatase related phosphoesterase family. As to quaternary structure, homodimer. This complex seems not to be involved in substrate recognition, it may confer only structural or functional stability. In terms of tissue distribution, expressed in embryonic gut in a pattern that guides germ cells towards mesoderm (initially in hindgut and then on lower side of gut). During extended germ band stage, expressed in ectoderm as a medial band throughout the trunk.

It localises to the membrane. The enzyme catalyses a 1,2-diacyl-sn-glycero-3-phosphate + H2O = a 1,2-diacyl-sn-glycerol + phosphate. Responsible for guiding the germ cells early in the process of migration from the lumen of the developing gut towards the overlying mesoderm, where the germ cells enter the gonads. May be involved in lipid metabolism. This chain is Putative phosphatidate phosphatase (wun), found in Drosophila melanogaster (Fruit fly).